A 361-amino-acid chain; its full sequence is Protein RecA (361 aa).

77 to 84 (GPESSGKT) contacts ATP.

This sequence belongs to the RecA family.

Its subcellular location is the cytoplasm. In terms of biological role, can catalyze the hydrolysis of ATP in the presence of single-stranded DNA, the ATP-dependent uptake of single-stranded DNA by duplex DNA, and the ATP-dependent hybridization of homologous single-stranded DNAs. It interacts with LexA causing its activation and leading to its autocatalytic cleavage. This is Protein RecA from Brucella anthropi (strain ATCC 49188 / DSM 6882 / CCUG 24695 / JCM 21032 / LMG 3331 / NBRC 15819 / NCTC 12168 / Alc 37) (Ochrobactrum anthropi).